Reading from the N-terminus, the 289-residue chain is Acetyl-coenzyme A carboxylase carboxyl transferase subunit beta (289 aa).

In terms of domain architecture, CoA carboxyltransferase N-terminal spans 34–289 (MWVKCNKCGE…KLINMHQNSF (256 aa)). Zn(2+) is bound by residues Cys38, Cys41, Cys57, and Cys60. The C4-type zinc finger occupies 38–60 (CNKCGEILYQNDLEKNYMVCNLC).

This sequence belongs to the AccD/PCCB family. In terms of assembly, acetyl-CoA carboxylase is a heterohexamer composed of biotin carboxyl carrier protein (AccB), biotin carboxylase (AccC) and two subunits each of ACCase subunit alpha (AccA) and ACCase subunit beta (AccD). Zn(2+) is required as a cofactor.

It is found in the cytoplasm. The catalysed reaction is N(6)-carboxybiotinyl-L-lysyl-[protein] + acetyl-CoA = N(6)-biotinyl-L-lysyl-[protein] + malonyl-CoA. The protein operates within lipid metabolism; malonyl-CoA biosynthesis; malonyl-CoA from acetyl-CoA: step 1/1. In terms of biological role, component of the acetyl coenzyme A carboxylase (ACC) complex. Biotin carboxylase (BC) catalyzes the carboxylation of biotin on its carrier protein (BCCP) and then the CO(2) group is transferred by the transcarboxylase to acetyl-CoA to form malonyl-CoA. This is Acetyl-coenzyme A carboxylase carboxyl transferase subunit beta from Clostridium botulinum (strain Kyoto / Type A2).